Reading from the N-terminus, the 531-residue chain is 2,3-bisphosphoglycerate-independent phosphoglycerate mutase (531 aa).

Mn(2+)-binding residues include Asp13 and Ser63. The active-site Phosphoserine intermediate is the Ser63. Substrate is bound by residues His124, 154–155 (RD), Arg187, Arg193, 261–264 (RPDR), and Lys342. Asp420, His424, Asp462, His463, and His480 together coordinate Mn(2+).

It belongs to the BPG-independent phosphoglycerate mutase family. In terms of assembly, monomer. Requires Mn(2+) as cofactor.

The catalysed reaction is (2R)-2-phosphoglycerate = (2R)-3-phosphoglycerate. It participates in carbohydrate degradation; glycolysis; pyruvate from D-glyceraldehyde 3-phosphate: step 3/5. In terms of biological role, catalyzes the interconversion of 2-phosphoglycerate and 3-phosphoglycerate. This Mycoplasma mycoides subsp. mycoides SC (strain CCUG 32753 / NCTC 10114 / PG1) protein is 2,3-bisphosphoglycerate-independent phosphoglycerate mutase.